The following is a 486-amino-acid chain: Nucleolar GTP-binding protein 2 (486 aa).

The interval 1–20 (MGTGKKEKSRRIREGDTKDG) is disordered. Phosphoserine is present on residues serine 60, serine 85, and serine 155. The CP-type G domain maps to 212 to 373 (WNELYKVIDS…LIDCPGIVPP (162 aa)). GTP is bound by residues 322–329 (GYPNTGKS) and 366–370 (DCPGI).

It belongs to the TRAFAC class YlqF/YawG GTPase family. NOG2 subfamily.

It is found in the nucleus. The protein localises to the nucleolus. In terms of biological role, GTPase that associates with pre-60S ribosomal subunits in the nucleolus and is required for their nuclear export and maturation. This chain is Nucleolar GTP-binding protein 2 (NOG2), found in Saccharomyces cerevisiae (strain ATCC 204508 / S288c) (Baker's yeast).